The sequence spans 490 residues: Probable glycine dehydrogenase (decarboxylating) subunit 2 (490 aa).

Lys-273 carries the post-translational modification N6-(pyridoxal phosphate)lysine.

It belongs to the GcvP family. C-terminal subunit subfamily. The glycine cleavage system is composed of four proteins: P, T, L and H. In this organism, the P 'protein' is a heterodimer of two subunits. It depends on pyridoxal 5'-phosphate as a cofactor.

The enzyme catalyses N(6)-[(R)-lipoyl]-L-lysyl-[glycine-cleavage complex H protein] + glycine + H(+) = N(6)-[(R)-S(8)-aminomethyldihydrolipoyl]-L-lysyl-[glycine-cleavage complex H protein] + CO2. Its function is as follows. The glycine cleavage system catalyzes the degradation of glycine. The P protein binds the alpha-amino group of glycine through its pyridoxal phosphate cofactor; CO(2) is released and the remaining methylamine moiety is then transferred to the lipoamide cofactor of the H protein. This Staphylococcus aureus (strain Newman) protein is Probable glycine dehydrogenase (decarboxylating) subunit 2.